The chain runs to 240 residues: DNA repair protein RecO (240 aa).

The protein belongs to the RecO family.

Functionally, involved in DNA repair and RecF pathway recombination. This is DNA repair protein RecO from Wolbachia pipientis wMel.